The primary structure comprises 75 residues: Exodeoxyribonuclease 7 small subunit (75 aa).

This sequence belongs to the XseB family. In terms of assembly, heterooligomer composed of large and small subunits.

It localises to the cytoplasm. It carries out the reaction Exonucleolytic cleavage in either 5'- to 3'- or 3'- to 5'-direction to yield nucleoside 5'-phosphates.. Its function is as follows. Bidirectionally degrades single-stranded DNA into large acid-insoluble oligonucleotides, which are then degraded further into small acid-soluble oligonucleotides. The polypeptide is Exodeoxyribonuclease 7 small subunit (Thermotoga maritima (strain ATCC 43589 / DSM 3109 / JCM 10099 / NBRC 100826 / MSB8)).